Here is a 364-residue protein sequence, read N- to C-terminus: Lysophosphatidic acid receptor 1 (364 aa).

Over 1 to 50 (MAAAFTSSPVVSQPQFTAMNEQQCFSNESIAFFYNRSGKYLATEWNTVTK) the chain is Extracellular. Disulfide bonds link cysteine 24–cysteine 190 and cysteine 188–cysteine 195. 2 N-linked (GlcNAc...) asparagine glycosylation sites follow: asparagine 27 and asparagine 35. Lysine 39 contributes to the a 1-acyl-sn-glycero-3-phosphate binding site. The chain crosses the membrane as a helical span at residues 51–75 (LVMGLGITVCIFIMLANLLVMVAIY). At 76–83 (VNRRFHFP) the chain is on the cytoplasmic side. Residues 84 to 107 (IYYLMANLAAADFFAGLAYFYLMF) form a helical membrane-spanning segment. The Extracellular segment spans residues 108-121 (NTGPNTRRLTVSTW). The chain crosses the membrane as a helical span at residues 122 to 144 (LLRQGLIDTSLTVSVANLLAIAI). Position 124–129 (124–129 (RQGLID)) interacts with a 1-acyl-sn-glycero-3-phosphate. Over 145-163 (ERHITVFRMQLHARMSNRR) the chain is Cytoplasmic. Residues 164-184 (VVVVIVVIWTMAIVMGAIPSV) traverse the membrane as a helical segment. At 185–204 (GWNCICDIENCSNMAPLYSD) the chain is on the extracellular side. The helical transmembrane segment at 205–225 (SYLVFWAIFNLVTFVVMVVLY) threads the bilayer. Tryptophan 210 contributes to the a 1-acyl-sn-glycero-3-phosphate binding site. Over 226 to 255 (AHIFGYVRQRTMRMSRHSSGPRRNRDTMMS) the chain is Cytoplasmic. A helical transmembrane segment spans residues 256–280 (LLKTVVIVLGAFIICWTPGLVLLLL). At 281 to 294 (DVCCPQCDVLAYEK) the chain is on the extracellular side. A disulfide bond links cysteine 284 and cysteine 287. A helical transmembrane segment spans residues 295-315 (FFLLLAEFNSAMNPIIYSYRD). The Cytoplasmic segment spans residues 316-364 (KEMSATFRQILCCQRSENTSGPTEGSDRSASSLNHTILAGVHSNDHSVV). Phosphoserine is present on serine 341. Threonine 351 is modified (phosphothreonine).

It belongs to the G-protein coupled receptor 1 family. Interacts with RALA and GRK2. Interacts with GNAQ and GNA13. Interacts with CD14; the interaction is enhanced by exposure to bacterial lipopolysaccharide (LPS). In terms of processing, N-glycosylated.

The protein localises to the cell surface. Its subcellular location is the cell membrane. It localises to the endosome. Functionally, receptor for lysophosphatidic acid (LPA). Plays a role in the reorganization of the actin cytoskeleton, cell migration, differentiation and proliferation, and thereby contributes to the responses to tissue damage and infectious agents. Activates downstream signaling cascades via the G(i)/G(o), G(12)/G(13), and G(q) families of heteromeric G proteins. Signaling inhibits adenylyl cyclase activity and decreases cellular cAMP levels. Signaling triggers an increase of cytoplasmic Ca(2+) levels. Activates RALA; this leads to the activation of phospholipase C (PLC) and the formation of inositol 1,4,5-trisphosphate. Signaling mediates activation of down-stream MAP kinases. Contributes to the regulation of cell shape. Promotes Rho-dependent reorganization of the actin cytoskeleton in neuronal cells and neurite retraction. Promotes the activation of Rho and the formation of actin stress fibers. Promotes formation of lamellipodia at the leading edge of migrating cells via activation of RAC1. Through its function as LPA receptor, plays a role in chemotaxis and cell migration, including responses to injury and wounding. Plays a role in triggering inflammation in response to bacterial lipopolysaccharide (LPS) via its interaction with CD14. Promotes cell proliferation in response to LPA. Inhibits the intracellular ciliogenesis pathway in response to LPA and through AKT1 activation. Required for normal skeleton development. May play a role in osteoblast differentiation. Required for normal brain development. Required for normal proliferation, survival and maturation of newly formed neurons in the adult dentate gyrus. Plays a role in pain perception and in the initiation of neuropathic pain. This Bos taurus (Bovine) protein is Lysophosphatidic acid receptor 1 (LPAR1).